Here is a 378-residue protein sequence, read N- to C-terminus: Mannitol-1-phosphate 5-dehydrogenase (378 aa).

4 to 15 contributes to the NAD(+) binding site; sequence SVHFGAGNIGRG.

Belongs to the mannitol dehydrogenase family.

The enzyme catalyses D-mannitol 1-phosphate + NAD(+) = beta-D-fructose 6-phosphate + NADH + H(+). In Streptococcus pneumoniae serotype 4 (strain ATCC BAA-334 / TIGR4), this protein is Mannitol-1-phosphate 5-dehydrogenase.